We begin with the raw amino-acid sequence, 884 residues long: Translation initiation factor IF-2 (884 aa).

Basic and acidic residues-rich tracts occupy residues 110-153 (AKAK…KEKA) and 193-234 (KQKE…DHHV). The segment at 110–291 (AKAKAEADAK…NRSTAPQSMA (182 aa)) is disordered. Residues 255 to 268 (GRRARNKPTNKKRG) are compositionally biased toward basic residues. Residues 384-553 (TRAPVVTIMG…LLQSEVLELK (170 aa)) enclose the tr-type G domain. A G1 region spans residues 393–400 (GHVDHGKT). Residue 393–400 (GHVDHGKT) participates in GTP binding. The interval 418–422 (GITQH) is G2. Positions 439 to 442 (DTPG) are G3. Residues 439–443 (DTPGH) and 493–496 (NKMD) contribute to the GTP site. The tract at residues 493-496 (NKMD) is G4. The G5 stretch occupies residues 529–531 (SAK).

This sequence belongs to the TRAFAC class translation factor GTPase superfamily. Classic translation factor GTPase family. IF-2 subfamily.

It localises to the cytoplasm. Its function is as follows. One of the essential components for the initiation of protein synthesis. Protects formylmethionyl-tRNA from spontaneous hydrolysis and promotes its binding to the 30S ribosomal subunits. Also involved in the hydrolysis of GTP during the formation of the 70S ribosomal complex. This Shewanella denitrificans (strain OS217 / ATCC BAA-1090 / DSM 15013) protein is Translation initiation factor IF-2.